We begin with the raw amino-acid sequence, 282 residues long: Undecaprenyl-diphosphatase (282 aa).

7 helical membrane-spanning segments follow: residues 40-60, 89-109, 113-133, 150-170, 196-216, 230-250, and 258-278; these read GAAF…IYFM, WMIA…KDDI, LRSL…LSIA, ISEI…MALI, FSFL…LYKT, IAVA…FLLT, and GIFI…IGTG.

The protein belongs to the UppP family.

It is found in the cell inner membrane. The catalysed reaction is di-trans,octa-cis-undecaprenyl diphosphate + H2O = di-trans,octa-cis-undecaprenyl phosphate + phosphate + H(+). Catalyzes the dephosphorylation of undecaprenyl diphosphate (UPP). Confers resistance to bacitracin. The protein is Undecaprenyl-diphosphatase of Chlorobaculum parvum (strain DSM 263 / NCIMB 8327) (Chlorobium vibrioforme subsp. thiosulfatophilum).